A 643-amino-acid polypeptide reads, in one-letter code: Phosphatidylinositol-3,5-bisphosphate 3-phosphatase MTMR2 (643 aa).

Polar residues-rich tracts occupy residues 1–12 (MEKSSSCESLGS) and 23–40 (DSLSSASTSHSENSVHTK). Positions 1-56 (MEKSSSCESLGSQPAAARPPSVDSLSSASTSHSENSVHTKSASVVSSDSISTSADN) are disordered. 2 positions are modified to phosphoserine: Ser-6 and Ser-9. A compositionally biased stretch (low complexity) spans 41–55 (SASVVSSDSISTSAD). Position 58 is a phosphoserine (Ser-58). One can recognise a GRAM domain in the interval 68–139 (NKLAEMEEPP…GVINRVEKIG (72 aa)). One can recognise a Myotubularin phosphatase domain in the interval 205 to 580 (GWKLYDPLLE…RHLELWVGYY (376 aa)). A 1,2-diacyl-sn-glycero-3-phospho-(1D-myo-inositol-3,5-bisphosphate)-binding residues include Asn-330, Asn-355, and Ile-356. A 1,2-diacyl-sn-glycero-3-phospho-(1D-myo-inositol-3-phosphate) contacts are provided by Asn-330, Asn-355, and Ile-356. Cys-417 serves as the catalytic Phosphocysteine intermediate. A 1,2-diacyl-sn-glycero-3-phospho-(1D-myo-inositol-3,5-bisphosphate) contacts are provided by Ser-418, Asp-419, Gly-420, Trp-421, Asp-422, Arg-423, Arg-459, and Arg-463. The a 1,2-diacyl-sn-glycero-3-phospho-(1D-myo-inositol-3-phosphate) site is built by Ser-418, Asp-419, Gly-420, Trp-421, Asp-422, and Arg-423. Arg-463 serves as a coordination point for a 1,2-diacyl-sn-glycero-3-phospho-(1D-myo-inositol-3-phosphate). Positions 593–627 (IHNRYKELLAKRAELQKKVEELQREISNRSTSSSE) form a coiled coil. The segment at 615–643 (QREISNRSTSSSERASSPAQCVTPVQTVV) is disordered. Residues 620–631 (NRSTSSSERASS) are compositionally biased toward low complexity. Residues 632–643 (PAQCVTPVQTVV) are compositionally biased toward polar residues.

It belongs to the protein-tyrosine phosphatase family. Non-receptor class myotubularin subfamily. In terms of assembly, homodimer (via coiled-coil domain). Heterotetramer consisting of one MTMR2 dimer and one SBF2/MTMR13 dimer; specifically in peripheral nerves stabilizes SBF2/MTMR13 at the membranes and increases MTMR2 catalytic activity towards phosphatidylinositol 3,5-bisphosphate and to a lesser extent towards phosphatidylinositol 3-phosphate. Heterodimer with SBF1/MTMR5; acts as an adapter for the phosphatase MTMR2 to regulate MTMR2 catalytic activity and subcellular location. Heterodimer with MTMR12. In terms of processing, phosphorylation at Ser-58 decreases MTMR2 localization to endocytic vesicular structures.

Its subcellular location is the cytoplasm. The protein localises to the early endosome membrane. It localises to the perinuclear region. The protein resides in the cell projection. It is found in the axon. Its subcellular location is the endosome membrane. The catalysed reaction is a 1,2-diacyl-sn-glycero-3-phospho-(1D-myo-inositol-3,5-bisphosphate) + H2O = a 1,2-diacyl-sn-glycero-3-phospho-(1D-myo-inositol-5-phosphate) + phosphate. It carries out the reaction a 1,2-diacyl-sn-glycero-3-phospho-(1D-myo-inositol-3-phosphate) + H2O = a 1,2-diacyl-sn-glycero-3-phospho-(1D-myo-inositol) + phosphate. The enzyme catalyses 1,2-dioctanoyl-sn-glycero-3-phospho-(1-D-myo-inositol-3-phosphate) + H2O = 1,2-dioctanoyl-sn-glycero-3-phospho-(1D-myo-inositol) + phosphate. It catalyses the reaction 1,2-dioctanoyl-sn-glycero-3-phospho-(1D-myo-inositol-3,5-bisphosphate) + H2O = 1,2-dioctanoyl-sn-glycero-3-phospho-(1D-myo-inositol-5-phosphate) + phosphate. Its function is as follows. Lipid phosphatase that specifically dephosphorylates the D-3 position of phosphatidylinositol 3-phosphate and phosphatidylinositol 3,5-bisphosphate, generating phosphatidylinositol and phosphatidylinositol 5-phosphate. Regulates the level of these phosphoinositides critical for various biological processes including autophagy initiation and autophagosome maturation. This Pongo abelii (Sumatran orangutan) protein is Phosphatidylinositol-3,5-bisphosphate 3-phosphatase MTMR2.